Reading from the N-terminus, the 313-residue chain is Malate dehydrogenase (313 aa).

NAD(+) contacts are provided by residues 8 to 13 and Asp-33; that span reads GAGNVG. The substrate site is built by Arg-83 and Arg-89. NAD(+)-binding positions include Asn-96 and 119-121; that span reads ISN. Substrate contacts are provided by Asn-121 and Arg-152. Catalysis depends on His-176, which acts as the Proton acceptor.

It belongs to the LDH/MDH superfamily. MDH type 3 family.

The catalysed reaction is (S)-malate + NAD(+) = oxaloacetate + NADH + H(+). In terms of biological role, catalyzes the reversible oxidation of malate to oxaloacetate. The polypeptide is Malate dehydrogenase (Parabacteroides distasonis (strain ATCC 8503 / DSM 20701 / CIP 104284 / JCM 5825 / NCTC 11152)).